A 293-amino-acid polypeptide reads, in one-letter code: Chorion protein S36 (293 aa).

The signal sequence occupies residues 1 to 20 (MQLGLWFGLFAVAAAPLVSA). Polar residues predominate over residues 235 to 253 (QSYGQPQAYNQPQAYSQPQ). Residues 235–293 (QSYGQPQAYNQPQAYSQPQSYGNSGSSGAGNSGPSSDSYAAGAETPLYASPAPYGSPSY) form a disordered region.

This sequence belongs to the chorion protein S36 family.

It localises to the secreted. Chorion membrane (egg shell) protein; protects the egg from the environment. This is Chorion protein S36 (Cp36) from Drosophila virilis (Fruit fly).